Consider the following 193-residue polypeptide: ATP-dependent Clp protease proteolytic subunit (193 aa).

The Nucleophile role is filled by Ser98. Residue His123 is part of the active site.

The protein belongs to the peptidase S14 family. As to quaternary structure, fourteen ClpP subunits assemble into 2 heptameric rings which stack back to back to give a disk-like structure with a central cavity, resembling the structure of eukaryotic proteasomes.

It is found in the cytoplasm. It carries out the reaction Hydrolysis of proteins to small peptides in the presence of ATP and magnesium. alpha-casein is the usual test substrate. In the absence of ATP, only oligopeptides shorter than five residues are hydrolyzed (such as succinyl-Leu-Tyr-|-NHMec, and Leu-Tyr-Leu-|-Tyr-Trp, in which cleavage of the -Tyr-|-Leu- and -Tyr-|-Trp bonds also occurs).. Functionally, cleaves peptides in various proteins in a process that requires ATP hydrolysis. Has a chymotrypsin-like activity. Plays a major role in the degradation of misfolded proteins. The sequence is that of ATP-dependent Clp protease proteolytic subunit from Glaesserella parasuis serovar 5 (strain SH0165) (Haemophilus parasuis).